The primary structure comprises 914 residues: MASESSPLLAYRLLGEEGVALPANGAGGPGGASARKLSTFLGVVVPTVLSMFSIVVFLRIGFVVGHAGLLQALAMLLVAYFILALTVLSVCAIATNGAVQGGGAYFMISRTLGPEVGGSIGLMFYLANVCGCAVSLLGLVESVLDVFGADATGPSGLRVLPQGYGWNLLYGSLLLGLVGGVCTLGAGLYARASFLTFLLVSGSLASVLISFVAVGPRDIRLTPRPGPNGSSLPPRFGHFTGFNSSTLKDNLGAGYAEDYTTGAVMNFASVFAVLFNGCTGIMAGANMSGELKDPSRAIPLGTIVAVAYTFFVYVLLFFLSSFTCDRTLLQEDYGFFRAISLWPPLVLIGIYATALSASMSSLIGASRILHALARDDLFGVILAPAKVVSRGGNPWAAVLYSWGLVQLVLLAGKLNTLAAVVTVFYLVAYAAVDLSCLSLEWASAPNFRPTFSLFSWHTCLLGVASCLLMMFLISPGAAGGSLLLMGLLAALLTARGGPSSWGYVSQALLFHQVRKYLLRLDVRKDHVKFWRPQLLLLVGNPRGALPLLRLANQLKKGGLYVLGHVTLGDLDSLPSDPVQPQYGAWLSLVDRAQVKAFVDLTLSPSVRQGAQHLLRISGLGGMKPNTLVLGFYDDAPPQDHFLTDPAFSEPADSTREGSSPALSTLFPPPRAPGSPRALNPQDYVATVADALKMNKNVVLARASGALPPERLSRGSGGTSQLHHVDVWPLNLLRPRGGPGYVDVCGLFLLQMATILGMVPAWHSARLRIFLCLGPREAPGAAEGRLRALLSQLRIRAEVQEVVWGEGAGAGEPEAEEEGDFVNSGRGDAEAEALARSANALVRAQQGRGTGGGPGGPEGGDAEGPITALTFLYLPRPPADPARYPRYLALLETLTRDLGPTLLVHGVTPVTCTDL.

Residues 1-36 (MASESSPLLAYRLLGEEGVALPANGAGGPGGASARK) are Cytoplasmic-facing. At S6 the chain carries Phosphoserine. A helical membrane pass occupies residues 37–57 (LSTFLGVVVPTVLSMFSIVVF). Residues 58 to 72 (LRIGFVVGHAGLLQA) lie on the Extracellular side of the membrane. A helical membrane pass occupies residues 73-93 (LAMLLVAYFILALTVLSVCAI). The Cytoplasmic segment spans residues 94-119 (ATNGAVQGGGAYFMISRTLGPEVGGS). Residues 120-140 (IGLMFYLANVCGCAVSLLGLV) form a helical membrane-spanning segment. At 141–167 (ESVLDVFGADATGPSGLRVLPQGYGWN) the chain is on the extracellular side. Residues 168-188 (LLYGSLLLGLVGGVCTLGAGL) traverse the membrane as a helical segment. At 189 to 193 (YARAS) the chain is on the cytoplasmic side. The chain crosses the membrane as a helical span at residues 194–214 (FLTFLLVSGSLASVLISFVAV). Over 215–262 (GPRDIRLTPRPGPNGSSLPPRFGHFTGFNSSTLKDNLGAGYAEDYTTG) the chain is Extracellular. Residues N228 and N243 are each glycosylated (N-linked (GlcNAc...) asparagine). Residues 263–283 (AVMNFASVFAVLFNGCTGIMA) traverse the membrane as a helical segment. Topologically, residues 284–297 (GANMSGELKDPSRA) are cytoplasmic. A helical transmembrane segment spans residues 298 to 318 (IPLGTIVAVAYTFFVYVLLFF). Over 319–338 (LSSFTCDRTLLQEDYGFFRA) the chain is Extracellular. The chain crosses the membrane as a helical span at residues 339–359 (ISLWPPLVLIGIYATALSASM). The Cytoplasmic portion of the chain corresponds to 360-390 (SSLIGASRILHALARDDLFGVILAPAKVVSR). A helical transmembrane segment spans residues 391-411 (GGNPWAAVLYSWGLVQLVLLA). Topologically, residues 412-416 (GKLNT) are extracellular. A helical transmembrane segment spans residues 417–437 (LAAVVTVFYLVAYAAVDLSCL). The Cytoplasmic segment spans residues 438–466 (SLEWASAPNFRPTFSLFSWHTCLLGVASC). The helical transmembrane segment at 467-487 (LLMMFLISPGAAGGSLLLMGL) threads the bilayer. Residues 488–740 (LAALLTARGG…LLRPRGGPGY (253 aa)) are Extracellular-facing. Residues 642–678 (LTDPAFSEPADSTREGSSPALSTLFPPPRAPGSPRAL) are disordered. The chain crosses the membrane as a helical span at residues 741–761 (VDVCGLFLLQMATILGMVPAW). Over 762–914 (HSARLRIFLC…GVTPVTCTDL (153 aa)) the chain is Cytoplasmic. The segment at 844-863 (QQGRGTGGGPGGPEGGDAEG) is disordered. Positions 847-858 (RGTGGGPGGPEG) are enriched in gly residues.

Belongs to the SLC12A transporter family. In terms of assembly, interacts with SLC12A1. Highly expressed in placenta, brain and kidney. Lower expression in lung, liver and heart.

The protein resides in the cell membrane. Its subcellular location is the lysosome membrane. In terms of biological role, may be an inhibitor of SLC12A1. Seems to correspond to a subunit of a multimeric transport system and thus, additional subunits may be required for its function. May play a role in lysosomal ion flux and osmoregulation. This Homo sapiens (Human) protein is Solute carrier family 12 member 9 (SLC12A9).